The primary structure comprises 300 residues: Ornithine carbamoyltransferase (300 aa).

Carbamoyl phosphate-binding positions include 50-53, glutamine 77, arginine 101, and 128-131; these read STRT and HPCQ. L-ornithine is bound by residues asparagine 159, aspartate 219, and 223–224; that span reads SM. Carbamoyl phosphate is bound by residues 257–258 and arginine 285; that span reads CL.

Belongs to the aspartate/ornithine carbamoyltransferase superfamily. OTCase family.

The protein localises to the cytoplasm. The catalysed reaction is carbamoyl phosphate + L-ornithine = L-citrulline + phosphate + H(+). It functions in the pathway amino-acid degradation; L-arginine degradation via ADI pathway; carbamoyl phosphate from L-arginine: step 2/2. Reversibly catalyzes the transfer of the carbamoyl group from carbamoyl phosphate (CP) to the N(epsilon) atom of ornithine (ORN) to produce L-citrulline. The polypeptide is Ornithine carbamoyltransferase (Haloquadratum walsbyi (strain DSM 16790 / HBSQ001)).